The chain runs to 1028 residues: Formate dehydrogenase major subunit (1028 aa).

The tat-type signal signal peptide spans 1–33; sequence MQVSRRKFFKICAGGMAGTSAAMLGFAPANVLA. Residues 43-114 enclose the 4Fe-4S Mo/W bis-MGD-type domain; that stretch reads AFESRNTCTY…GSLDYVNSES (72 aa). [4Fe-4S] cluster contacts are provided by C50, C53, C57, and C100. Residue U204 is a non-standard amino acid, selenocysteine.

It belongs to the prokaryotic molybdopterin-containing oxidoreductase family. Formate dehydrogenase is a membrane-bound complex, formed by subunits alpha, beta and gamma. Requires Mo-bis(molybdopterin guanine dinucleotide) as cofactor. [4Fe-4S] cluster is required as a cofactor. Predicted to be exported by the Tat system. The position of the signal peptide cleavage has not been experimentally proven.

It localises to the periplasm. It catalyses the reaction formate + NAD(+) = CO2 + NADH. In terms of biological role, allows to use formate as major electron donor during anaerobic respiration. Subunit alpha possibly forms the active site. This is Formate dehydrogenase major subunit (fdxG) from Haemophilus influenzae (strain ATCC 51907 / DSM 11121 / KW20 / Rd).